We begin with the raw amino-acid sequence, 228 residues long: LexA repressor (228 aa).

Residues 26–46 constitute a DNA-binding region (H-T-H motif); the sequence is FDEMKDALDLRSKSGIHRLIT. Catalysis depends on for autocatalytic cleavage activity residues Ser-149 and Lys-187.

It belongs to the peptidase S24 family. Homodimer.

The enzyme catalyses Hydrolysis of Ala-|-Gly bond in repressor LexA.. In terms of biological role, represses a number of genes involved in the response to DNA damage (SOS response), including recA and lexA. In the presence of single-stranded DNA, RecA interacts with LexA causing an autocatalytic cleavage which disrupts the DNA-binding part of LexA, leading to derepression of the SOS regulon and eventually DNA repair. This Cereibacter sphaeroides (strain ATCC 17025 / ATH 2.4.3) (Rhodobacter sphaeroides) protein is LexA repressor.